The sequence spans 458 residues: Serine--tRNA ligase (458 aa).

252-254 is a binding site for L-serine; the sequence is TAE. Residues 283–285 and V299 each bind ATP; that span reads RKE. E306 contributes to the L-serine binding site. Residue 370–373 participates in ATP binding; sequence EMVS. An L-serine-binding site is contributed by T405.

This sequence belongs to the class-II aminoacyl-tRNA synthetase family. Type-1 seryl-tRNA synthetase subfamily. In terms of assembly, homodimer. The tRNA molecule binds across the dimer.

It localises to the cytoplasm. It carries out the reaction tRNA(Ser) + L-serine + ATP = L-seryl-tRNA(Ser) + AMP + diphosphate + H(+). It catalyses the reaction tRNA(Sec) + L-serine + ATP = L-seryl-tRNA(Sec) + AMP + diphosphate + H(+). The protein operates within aminoacyl-tRNA biosynthesis; selenocysteinyl-tRNA(Sec) biosynthesis; L-seryl-tRNA(Sec) from L-serine and tRNA(Sec): step 1/1. In terms of biological role, catalyzes the attachment of serine to tRNA(Ser). Is also able to aminoacylate tRNA(Sec) with serine, to form the misacylated tRNA L-seryl-tRNA(Sec), which will be further converted into selenocysteinyl-tRNA(Sec). In Sulfolobus acidocaldarius (strain ATCC 33909 / DSM 639 / JCM 8929 / NBRC 15157 / NCIMB 11770), this protein is Serine--tRNA ligase.